The following is a 505-amino-acid chain: AMP phosphorylase (505 aa).

Residues Gly170, 196 to 201 (SRAITS), and Thr205 each bind AMP. Asp258 serves as the catalytic Proton donor. AMP is bound by residues Ser266 and Lys290.

This sequence belongs to the thymidine/pyrimidine-nucleoside phosphorylase family. Type 2 subfamily.

It catalyses the reaction AMP + phosphate = alpha-D-ribose 1,5-bisphosphate + adenine. The enzyme catalyses CMP + phosphate = cytosine + alpha-D-ribose 1,5-bisphosphate. It carries out the reaction UMP + phosphate = alpha-D-ribose 1,5-bisphosphate + uracil. In terms of biological role, catalyzes the conversion of AMP and phosphate to adenine and ribose 1,5-bisphosphate (R15P). Exhibits phosphorylase activity toward CMP and UMP in addition to AMP. Functions in an archaeal AMP degradation pathway, together with R15P isomerase and RubisCO. This is AMP phosphorylase from Methanococcus maripaludis (strain C6 / ATCC BAA-1332).